The sequence spans 309 residues: UDP-N-acetylenolpyruvoylglucosamine reductase (309 aa).

In terms of domain architecture, FAD-binding PCMH-type spans 34–221; that stretch reads RVGGPAQVLF…TAAREAAQPI (188 aa). Residue arginine 179 is part of the active site. Serine 228 serves as the catalytic Proton donor. Glutamate 298 is an active-site residue.

Belongs to the MurB family. Requires FAD as cofactor.

The protein localises to the cytoplasm. The enzyme catalyses UDP-N-acetyl-alpha-D-muramate + NADP(+) = UDP-N-acetyl-3-O-(1-carboxyvinyl)-alpha-D-glucosamine + NADPH + H(+). Its pathway is cell wall biogenesis; peptidoglycan biosynthesis. Functionally, cell wall formation. In Methylorubrum extorquens (strain PA1) (Methylobacterium extorquens), this protein is UDP-N-acetylenolpyruvoylglucosamine reductase.